Reading from the N-terminus, the 394-residue chain is Probable sugar efflux transporter (394 aa).

12 helical membrane-spanning segments follow: residues Val15–Leu35, Val50–Leu70, Met79–Trp99, Ile109–Val129, Gln137–Gly157, Ile168–Leu188, Pro209–Tyr229, Phe249–Gly269, Phe272–Tyr292, Leu299–Val319, Val333–Gly353, and Met362–Trp382.

The protein belongs to the major facilitator superfamily. SotB (TC 2.A.1.2) family.

Its subcellular location is the cell inner membrane. Its function is as follows. Involved in the efflux of sugars. The physiological role may be the reduction of the intracellular concentration of toxic sugars or sugar metabolites. The sequence is that of Probable sugar efflux transporter from Erwinia tasmaniensis (strain DSM 17950 / CFBP 7177 / CIP 109463 / NCPPB 4357 / Et1/99).